Reading from the N-terminus, the 256-residue chain is MSREENVYMAKLAEQAERYEEMVEYMEKVAKTVDVEELTVEERNLLSVAYKNVIGARRASWRIVSSIEQKEEGRGNEEHVTLIKEYRGKIEAELSKICDGILKLLDSHLVPSSTAAESKVFYLKMKGDYHRYLAEFKTGAERKEAAESTMVAYKAAQDIALADLAPTHPIRLGLALNFSVFYYEILNSPDKACNLAKQAFDEAISELDTLGEESYKDSTLIMQLLRDNLTLWTSDLTEDGGDEVKEASKGDACEGQ.

The protein belongs to the 14-3-3 family. As to quaternary structure, may form a complex with the transcriptional activator VP1 and the bZIP transcription factor EMBP1. As to expression, expressed in seedlings, internodes and panicles.

The protein resides in the cytoplasm. It localises to the nucleus. Functionally, is associated with a DNA binding complex that binds to the G box, a well-characterized cis-acting DNA regulatory element found in plant genes. This Oryza sativa subsp. japonica (Rice) protein is 14-3-3-like protein GF14-C (GF14C).